Consider the following 407-residue polypeptide: Eukaryotic initiation factor 4A-II (407 aa).

The disordered stretch occupies residues 1–22 (MSGGSADYNREHGGPEGMDPDG). The Q motif motif lies at 33-61 (DNFDDMNLKESLLRGIYAYGFEKPSAIQQ). The region spanning 64–235 (IIPCIKGYDV…KKFMRDPIRI (172 aa)) is the Helicase ATP-binding domain. 77–84 (AQSGTGKT) serves as a coordination point for ATP. A Phosphothreonine modification is found at Thr-159. Residues 183–186 (DEAD) carry the DEAD box motif. The Helicase C-terminal domain occupies 246–407 (GIKQFYINVE…EMPMNVADLI (162 aa)).

This sequence belongs to the DEAD box helicase family. eIF4A subfamily. In terms of assembly, eIF4F is a multi-subunit complex, the composition of which varies with external and internal environmental conditions. It is composed of at least EIF4A, EIF4E and EIF4G1/EIFFG3. Interacts with EIF4E. May interact with NOM1.

The enzyme catalyses ATP + H2O = ADP + phosphate + H(+). In terms of biological role, ATP-dependent RNA helicase which is a subunit of the eIF4F complex involved in cap recognition and is required for mRNA binding to ribosome. In the current model of translation initiation, eIF4A unwinds RNA secondary structures in the 5'-UTR of mRNAs which is necessary to allow efficient binding of the small ribosomal subunit, and subsequent scanning for the initiator codon. The sequence is that of Eukaryotic initiation factor 4A-II (EIF4A2) from Bos taurus (Bovine).